The sequence spans 375 residues: Alanine racemase (375 aa).

Residue Lys-35 is the Proton acceptor; specific for D-alanine of the active site. N6-(pyridoxal phosphate)lysine is present on Lys-35. Arg-130 contributes to the substrate binding site. The Proton acceptor; specific for L-alanine role is filled by Tyr-253. Met-305 serves as a coordination point for substrate.

The protein belongs to the alanine racemase family. Pyridoxal 5'-phosphate is required as a cofactor.

It catalyses the reaction L-alanine = D-alanine. It participates in amino-acid biosynthesis; D-alanine biosynthesis; D-alanine from L-alanine: step 1/1. In terms of biological role, catalyzes the interconversion of L-alanine and D-alanine. May also act on other amino acids. The polypeptide is Alanine racemase (alr) (Ralstonia nicotianae (strain ATCC BAA-1114 / GMI1000) (Ralstonia solanacearum)).